A 191-amino-acid chain; its full sequence is Large ribosomal subunit protein uL5 (191 aa).

Belongs to the universal ribosomal protein uL5 family. As to quaternary structure, part of the 50S ribosomal subunit; part of the 5S rRNA/L5/L18/L25 subcomplex. Contacts the 5S rRNA and the P site tRNA. Forms a bridge to the 30S subunit in the 70S ribosome.

Its function is as follows. This is one of the proteins that bind and probably mediate the attachment of the 5S RNA into the large ribosomal subunit, where it forms part of the central protuberance. In the 70S ribosome it contacts protein S13 of the 30S subunit (bridge B1b), connecting the 2 subunits; this bridge is implicated in subunit movement. Contacts the P site tRNA; the 5S rRNA and some of its associated proteins might help stabilize positioning of ribosome-bound tRNAs. The sequence is that of Large ribosomal subunit protein uL5 from Salinibacter ruber (strain DSM 13855 / M31).